The sequence spans 243 residues: Carboxy-S-adenosyl-L-methionine synthase (243 aa).

Residues Tyr39, 64-66 (GCS), 89-90 (DN), 117-118 (DL), Asn132, and Arg199 contribute to the S-adenosyl-L-methionine site.

It belongs to the class I-like SAM-binding methyltransferase superfamily. Cx-SAM synthase family. In terms of assembly, homodimer.

The catalysed reaction is prephenate + S-adenosyl-L-methionine = carboxy-S-adenosyl-L-methionine + 3-phenylpyruvate + H2O. Its function is as follows. Catalyzes the conversion of S-adenosyl-L-methionine (SAM) to carboxy-S-adenosyl-L-methionine (Cx-SAM). This chain is Carboxy-S-adenosyl-L-methionine synthase, found in Pseudoalteromonas atlantica (strain T6c / ATCC BAA-1087).